Reading from the N-terminus, the 173-residue chain is NADH-ubiquinone oxidoreductase chain 6 (173 aa).

5 helical membrane-spanning segments follow: residues 1–21 (MTYI…AVAS), 27–47 (FAAL…VGYG), 53–73 (LVLF…SAAL), 86–106 (SVLG…GWFW), and 139–159 (YGGG…FVVL).

It belongs to the complex I subunit 6 family.

The protein localises to the mitochondrion membrane. The catalysed reaction is a ubiquinone + NADH + 5 H(+)(in) = a ubiquinol + NAD(+) + 4 H(+)(out). Its function is as follows. Core subunit of the mitochondrial membrane respiratory chain NADH dehydrogenase (Complex I) that is believed to belong to the minimal assembly required for catalysis. Complex I functions in the transfer of electrons from NADH to the respiratory chain. The immediate electron acceptor for the enzyme is believed to be ubiquinone. The polypeptide is NADH-ubiquinone oxidoreductase chain 6 (MT-ND6) (Salmo salar (Atlantic salmon)).